We begin with the raw amino-acid sequence, 208 residues long: Large ribosomal subunit protein uL4 (208 aa).

The disordered stretch occupies residues 44-79; it reads QRQGTHKSKERSEISGSTRKLGRQKGGGGARRGDIN.

Belongs to the universal ribosomal protein uL4 family. As to quaternary structure, part of the 50S ribosomal subunit.

One of the primary rRNA binding proteins, this protein initially binds near the 5'-end of the 23S rRNA. It is important during the early stages of 50S assembly. It makes multiple contacts with different domains of the 23S rRNA in the assembled 50S subunit and ribosome. Functionally, forms part of the polypeptide exit tunnel. The polypeptide is Large ribosomal subunit protein uL4 (Phocaeicola vulgatus (strain ATCC 8482 / DSM 1447 / JCM 5826 / CCUG 4940 / NBRC 14291 / NCTC 11154) (Bacteroides vulgatus)).